Consider the following 342-residue polypeptide: Nucleoid-associated protein SO_2177 (342 aa).

It belongs to the YejK family.

It localises to the cytoplasm. The protein resides in the nucleoid. In Shewanella oneidensis (strain ATCC 700550 / JCM 31522 / CIP 106686 / LMG 19005 / NCIMB 14063 / MR-1), this protein is Nucleoid-associated protein SO_2177.